The following is a 145-amino-acid chain: Cytochrome c-type biogenesis protein CcmE (145 aa).

The Cytoplasmic segment spans residues 1–7 (MKAKHQR). Residues 8 to 28 (LILAVAALCGVAGAGVLAASA) traverse the membrane as a helical; Signal-anchor for type II membrane protein segment. Over 29–145 (LRDEAAYFRT…PKNMKAAVEG (117 aa)) the chain is Periplasmic. Residues His-123 and Tyr-127 each contribute to the heme site.

It belongs to the CcmE/CycJ family.

It is found in the cell inner membrane. Functionally, heme chaperone required for the biogenesis of c-type cytochromes. Transiently binds heme delivered by CcmC and transfers the heme to apo-cytochromes in a process facilitated by CcmF and CcmH. In Sphingopyxis alaskensis (strain DSM 13593 / LMG 18877 / RB2256) (Sphingomonas alaskensis), this protein is Cytochrome c-type biogenesis protein CcmE.